The sequence spans 3095 residues: Centrosome-associated protein 350 (3095 aa).

Disordered stretches follow at residues 1–24 (MRSSKSKEVPLPNPRNSQSKETIQ) and 63–105 (TKKS…RSPL). The segment covering 14–24 (PRNSQSKETIQ) has biased composition (polar residues). Phosphoserine occurs at positions 84 and 140. Disordered regions lie at residues 219–239 (DEMPNRTKGSENNSKPSLNNM), 251–272 (SDSSPSSSACNSQRSDISKRQQ), and 430–493 (KILG…RAWS). The segment covering 228–238 (SENNSKPSLNN) has biased composition (polar residues). Over residues 251–265 (SDSSPSSSACNSQRS) the composition is skewed to low complexity. Basic and acidic residues-rich tracts occupy residues 438-457 (MEQKERRPTSNDRSGRERVA) and 464-476 (GRAESDPKLDVSH). Position 468 is a phosphoserine (Ser-468). The segment covering 481 to 491 (RSSARSRSSRA) has biased composition (low complexity). A Phosphoserine modification is found at Ser-503. Disordered stretches follow at residues 538–623 (QAVR…QKNK) and 671–718 (ARQH…PPQP). Basic and acidic residues-rich tracts occupy residues 587-623 (YDTDEVRQYIVRQQEERRRRQHEEKKAQKEATEQKNK) and 690-699 (ESDKENKIQE). Residues 596-641 (IVRQQEERRRRQHEEKKAQKEATEQKNKRLQELYRRQREAFSKAKT) adopt a coiled-coil conformation. A Phosphoserine modification is found at Ser-691. The segment covering 701–714 (PPSASSSSDLSLSE) has biased composition (low complexity). 2 positions are modified to phosphoserine: Ser-874 and Ser-935. The tract at residues 977–996 (SVSEGPLLSEGSLSEEEERR) is disordered. Residues 979-988 (SEGPLLSEGS) are compositionally biased toward low complexity. Ser-1057 carries the phosphoserine modification. Disordered regions lie at residues 1099-1128 (YEDDFVSSPGSGTLTERKSTLESQVDGSSL) and 1151-1265 (QHSS…SQKL). Residues 1119–1128 (LESQVDGSSL) are compositionally biased toward polar residues. Residues 1153–1168 (SSGARSAGSTRSSSAS) show a composition bias toward low complexity. The span at 1194–1206 (DEEKVQSDSERGS) shows a compositional bias: basic and acidic residues. Position 1200 is a phosphoserine (Ser-1200). The span at 1251-1265 (QKTPTSPLSPSSQKL) shows a compositional bias: low complexity. A Phosphothreonine modification is found at Thr-1253. 2 positions are modified to phosphoserine: Ser-1256 and Ser-1259. The stretch at 1363-1402 (IKAQQQRHERDLALLKLKAEQEALECQRQLEETRNKTAQV) forms a coiled coil. Disordered stretches follow at residues 1490-1668 (AETD…GQDS), 1720-1739 (LRDKGEDDKMPPLRKKQRGL), 1787-1864 (KLKS…QRRQ), and 1893-2017 (AWDK…PVKS). Positions 1503–1513 (QSKEGAVDSKR) are enriched in basic and acidic residues. Composition is skewed to low complexity over residues 1517 to 1526 (SPSRDSYSES) and 1536 to 1545 (SSGSSRQDSP). Over residues 1551 to 1564 (KENEKPFHGEKMES) the composition is skewed to basic and acidic residues. Ser-1606 carries the post-translational modification Phosphoserine. A compositionally biased stretch (basic and acidic residues) spans 1624–1640 (ESHRRFNMEKKRGHHDD). A phosphoserine mark is found at Ser-1641 and Ser-1646. The stretch at 1700–1793 (KALKEKTKAE…LQEKLKSAGE (94 aa)) forms a coiled coil. Positions 1787–1796 (KLKSAGEKKL) are enriched in basic and acidic residues. Residue Ser-1812 is modified to Phosphoserine. The span at 1819 to 1835 (ETRSPSPISISSSETSS) shows a compositional bias: low complexity. Composition is skewed to basic and acidic residues over residues 1845–1864 (SRMDEKFLTKREQKLMQRRQ) and 1894–1915 (WDKELVKPRTPKKEQESQRTEQ). A coiled-coil region spans residues 1850-1893 (KFLTKREQKLMQRRQHAEELLEWKRRLDAEEAEIQQMEKQALAA). At Ser-1930 the chain carries Phosphoserine. The span at 1980–1994 (STSPSKHSPPKSCLS) shows a compositional bias: low complexity. Positions 1999–2011 (ESSKASHRTEGHC) are enriched in basic and acidic residues. Positions 2043–2092 (IEGRIRALKDELRKRKSVVEQLKREQRKRQKERLKAQEASLLRQLETYDE) form a coiled coil. Residue Ser-2108 is modified to Phosphoserine. 4 disordered regions span residues 2116–2155 (KTLSSVSEKPKIKPHPLHRSETAKTWKSVTESERSRGSLA), 2191–2265 (IEHL…VEDA), 2286–2427 (LSSK…EISE), and 2440–2471 (VHSERLLELRSPTELMKSKERSDVGHEQGGTE). The segment covering 2133 to 2151 (HRSETAKTWKSVTESERSR) has biased composition (basic and acidic residues). Ser-2198 bears the Phosphoserine mark. 2 stretches are compositionally biased toward basic and acidic residues: residues 2202–2214 (SSRKAQTESRDSL) and 2227–2259 (NAPDRIYDVSEAKAEDTSQKSEIQEIESMKLES). Positions 2286 to 2300 (LSSKELPSDSANVQQ) are enriched in polar residues. Over residues 2301 to 2331 (DLDKPATETSHEKEEALKEDQSNHSTDDRSP) the composition is skewed to basic and acidic residues. Residues 2349-2362 (DSTCSGQLSVPKES) show a composition bias toward polar residues. Basic and acidic residues-rich tracts occupy residues 2377–2387 (ISADEISKDDS) and 2395–2407 (LRKDSQSHRDRSQ). Residues 2409 to 2420 (TRSSRSRATGSG) show a composition bias toward low complexity. 2 positions are modified to phosphoserine: Ser-2421 and Ser-2450. The span at 2455-2465 (MKSKERSDVGH) shows a compositional bias: basic and acidic residues. The 43-residue stretch at 2504 to 2546 (GETDFAKGFWAGVELDKPEGNNNGTYDGIVYFVCKDKHGIFAP) folds into the CAP-Gly domain. The residue at position 2671 (Thr-2671) is a Phosphothreonine. The stretch at 2700-2731 (LLDLLTREKNQLEAQLKSSISEEKKSKQQLET) forms a coiled coil. Positions 2767-2793 (QEFLDQKKVPPQDLPQNTEEQSPSVPS) are disordered. A compositionally biased stretch (polar residues) spans 2780–2791 (LPQNTEEQSPSV). Phosphoserine occurs at positions 2809 and 2818.

Part of a ternary complex that contains CEP350, CEP43 and MAPRE1. Interacts (via C-terminus) directly with CEP43 (via N-terminus). Interacts with NR1H3, PPARA, PPARD and PPARG. Interacts directly with microtubules. Interacts with the fusion protein CEP43-FGFR1, and by doing so recruits and activates PI3K and PLC-gamma. Interacts with CYLD. Interacts with CFAP157. Interacts with CEP19 (via C-terminus). Interacts with CEP78; promoting CEP78 localization to centrosome and centriole. In terms of processing, phosphorylated during mitosis.

The protein resides in the cytoplasm. It localises to the cytoskeleton. The protein localises to the microtubule organizing center. Its subcellular location is the centrosome. It is found in the spindle. The protein resides in the nucleus. It localises to the centriole. The protein localises to the cilium basal body. Plays an essential role in centriole growth by stabilizing a procentriolar seed composed of at least, SASS6 and CPAP. Required for anchoring microtubules to the centrosomes and for the integrity of the microtubule network. Recruits PPARA to discrete subcellular compartments and thereby modulates PPARA activity. Required for ciliation. This is Centrosome-associated protein 350 from Mus musculus (Mouse).